A 416-amino-acid chain; its full sequence is MELGLALRLVAPPPLLPCLSRRALSLPPDFVSSRVLRGRRIHASRLKHGAGVVCNAIMTYSGVEEEEMVEEEMEEEAEPAVSTRPRLELIEKPDRSLALLDEYESEELGTSLCANHRSGYVAVLGKPNVGKSTLINQMVGQKLSIVTDKPQTTRHRILGICSEPEYQIILYDTPGVIKKEMHKLDSMMMKNVRSAIGSADCVLVVADACKTPEKIDEMLEEGVGNKDIGLPVLLVLNKKDLIKPGEIAKKLEWYQKFTNVDDVIPISAKFGHGVDDIKEWILSKLPLGPAYYPKDIASEHPERFFVGEIVREKIFVQYRQEIPYSCQVNVVSYKSRPAAKDFIQVEILVEKESQRGIILGKDGKSIKMLATASRLDIEDFLQKKVYLEVEVKVKENWRQDERLLKRYGYGGEIQAL.

A chloroplast-targeting transit peptide spans 1–53 (MELGLALRLVAPPPLLPCLSRRALSLPPDFVSSRVLRGRRIHASRLKHGAGVV). Positions 117-287 (RSGYVAVLGK…KEWILSKLPL (171 aa)) constitute an Era-type G domain. The G1 stretch occupies residues 125-132 (GKPNVGKS). Residue 125-132 (GKPNVGKS) coordinates GTP. The interval 151 to 155 (QTTRH) is G2. The G3 stretch occupies residues 172–175 (DTPG). GTP-binding positions include 172-176 (DTPGV) and 237-240 (NKKD). Residues 237–240 (NKKD) are G4. The G5 stretch occupies residues 266–268 (ISA). The region spanning 318-395 (YRQEIPYSCQ…YLEVEVKVKE (78 aa)) is the KH type-2 domain.

It belongs to the TRAFAC class TrmE-Era-EngA-EngB-Septin-like GTPase superfamily. Era GTPase family.

The protein localises to the plastid. It is found in the chloroplast stroma. It localises to the chloroplast nucleoid. In terms of biological role, nuclear genome-encoded probable GTPase involved in ribosome biogenesis in chloroplasts. Plays a role in 16S rRNA maturation in plastids and may contribute to the assembly of the small (30S) ribosomal subunit. The sequence is that of GTPase ERA1, chloroplastic from Zea mays (Maize).